Consider the following 375-residue polypeptide: Glutamate 5-kinase (375 aa).

Lysine 17 is an ATP binding site. Positions 58, 145, and 157 each coordinate substrate. ATP is bound by residues 177 to 178 (SD) and 219 to 225 (TGGMVTK). Positions 281 to 359 (QGALTLDDGA…RELARELGPA (79 aa)) constitute a PUA domain.

The protein belongs to the glutamate 5-kinase family.

The protein localises to the cytoplasm. It catalyses the reaction L-glutamate + ATP = L-glutamyl 5-phosphate + ADP. Its pathway is amino-acid biosynthesis; L-proline biosynthesis; L-glutamate 5-semialdehyde from L-glutamate: step 1/2. Functionally, catalyzes the transfer of a phosphate group to glutamate to form L-glutamate 5-phosphate. The sequence is that of Glutamate 5-kinase from Streptomyces avermitilis (strain ATCC 31267 / DSM 46492 / JCM 5070 / NBRC 14893 / NCIMB 12804 / NRRL 8165 / MA-4680).